Consider the following 115-residue polypeptide: Large ribosomal subunit protein P2 (115 aa).

Position 1 is an N-acetylmethionine (Met-1). A phosphoserine mark is found at Ser-17 and Ser-19. Lys-21 carries the post-translational modification N6-acetyllysine; alternate. Lys-21 bears the N6-succinyllysine; alternate mark. Over residues 76–90 the composition is skewed to low complexity; that stretch reads APGSAAPAAGSAPAA. Residues 76–115 are disordered; the sequence is APGSAAPAAGSAPAAAEEKKEEKKEESEESDDDMGFGLFD. 2 positions are modified to phosphoserine: Ser-79 and Ser-86. Over residues 91 to 101 the composition is skewed to basic and acidic residues; it reads AEEKKEEKKEE. Residues Ser-102 and Ser-105 each carry the phosphoserine modification.

Belongs to the eukaryotic ribosomal protein P1/P2 family. As to quaternary structure, heterodimer with RPLP1 at the lateral ribosomal stalk of the large ribosomal subunit.

Functionally, plays an important role in the elongation step of protein synthesis. The chain is Large ribosomal subunit protein P2 (RPLP2) from Bos taurus (Bovine).